The sequence spans 81 residues: MADPADVKKLSFETAMEELESIVKRLEDGKVPLEESVAIYERGEALKRRCEELLRTAEARVDKITTDAAGQPTGTAPLDVE.

The protein belongs to the XseB family. In terms of assembly, heterooligomer composed of large and small subunits.

The protein resides in the cytoplasm. It carries out the reaction Exonucleolytic cleavage in either 5'- to 3'- or 3'- to 5'-direction to yield nucleoside 5'-phosphates.. Its function is as follows. Bidirectionally degrades single-stranded DNA into large acid-insoluble oligonucleotides, which are then degraded further into small acid-soluble oligonucleotides. This chain is Exodeoxyribonuclease 7 small subunit, found in Rhodopseudomonas palustris (strain BisA53).